A 341-amino-acid polypeptide reads, in one-letter code: Anthranilate phosphoribosyltransferase (341 aa).

Residues glycine 81, 84 to 85 (GD), threonine 89, 91 to 94 (NIST), 109 to 117 (KHGNRKASS), and threonine 121 contribute to the 5-phospho-alpha-D-ribose 1-diphosphate site. Glycine 81 is an anthranilate binding site. Serine 93 contributes to the Mg(2+) binding site. Residue asparagine 112 participates in anthranilate binding. Anthranilate is bound at residue arginine 167. Mg(2+) is bound by residues aspartate 226 and glutamate 227.

The protein belongs to the anthranilate phosphoribosyltransferase family. In terms of assembly, homodimer. Mg(2+) is required as a cofactor.

It carries out the reaction N-(5-phospho-beta-D-ribosyl)anthranilate + diphosphate = 5-phospho-alpha-D-ribose 1-diphosphate + anthranilate. It participates in amino-acid biosynthesis; L-tryptophan biosynthesis; L-tryptophan from chorismate: step 2/5. In terms of biological role, catalyzes the transfer of the phosphoribosyl group of 5-phosphorylribose-1-pyrophosphate (PRPP) to anthranilate to yield N-(5'-phosphoribosyl)-anthranilate (PRA). In Parvibaculum lavamentivorans (strain DS-1 / DSM 13023 / NCIMB 13966), this protein is Anthranilate phosphoribosyltransferase.